The primary structure comprises 439 residues: 23S rRNA (uracil(1939)-C(5))-methyltransferase RlmD (439 aa).

The region spanning 5–63 (RKLEHKTYKLNIESFSHEGRGIAHFEDKIIFVSDALPGELVIANRTFSCAKFEEADAKE) is the TRAM domain. The [4Fe-4S] cluster site is built by Cys-76, Cys-82, Cys-85, and Cys-164. The S-adenosyl-L-methionine site is built by Gln-271, Phe-300, Asn-305, Glu-321, Asp-348, and Asp-370. Catalysis depends on Cys-396, which acts as the Nucleophile.

The protein belongs to the class I-like SAM-binding methyltransferase superfamily. RNA M5U methyltransferase family. RlmD subfamily.

It carries out the reaction uridine(1939) in 23S rRNA + S-adenosyl-L-methionine = 5-methyluridine(1939) in 23S rRNA + S-adenosyl-L-homocysteine + H(+). Its function is as follows. Catalyzes the formation of 5-methyl-uridine at position 1939 (m5U1939) in 23S rRNA. The sequence is that of 23S rRNA (uracil(1939)-C(5))-methyltransferase RlmD from Vesicomyosocius okutanii subsp. Calyptogena okutanii (strain HA).